A 90-amino-acid chain; its full sequence is uncharacterized protein (90 aa).

The protein resides in the cytoplasm. This is an uncharacterized protein from Saccharomyces cerevisiae (strain ATCC 204508 / S288c) (Baker's yeast).